We begin with the raw amino-acid sequence, 441 residues long: MAAMGSKDGGGGGGGMAAQAGRLGVVASVAFNLAALAFYLRRRYFGGDDAAAVRKKAEAEVAPSSGKPPVTKDSIINLDHGDPTMYEAFWRGGAGERATIVIPGWQTMSYFSDVGSLCWFLEPGLEREVRRLHRLVGNAVADGYHVLVGTGSTQLFQAALYALSPPGPSAPMNVVSPAPYYSSYPAVTDFLKSGLYRWAGDAKMFDGDTYVELVCSPSNPDGGIREAVLKSGDGVAVHDLAYYWPQYTPITSAAAHDIMLFTVSKCTGHAGTRLGWALVKDRAVAQKMSKFIELNTIGVSKDSQLRAAKILKAITDGYDRAPAAGDDDDDSSRLFHFARRKMVSRWAKLRAAVAASGIFTLPDELPGHCTFANETVSAYPPFAWLRCGKEGVDDLEGYLRERKIISRGGGKFGADGRVVRISMLDTDEAFAIFVDRLAAMN.

Pyridoxal 5'-phosphate-binding positions include Tyr110, 152 to 153 (ST), Asn219, 239 to 242 (DLAY), 262 to 265 (TVSK), and Arg273. Lys265 bears the N6-(pyridoxal phosphate)lysine mark.

The protein belongs to the alliinase family. Pyridoxal 5'-phosphate is required as a cofactor. As to expression, highly expressed in anthers. Expressed at low levels in ovaries.

The catalysed reaction is L-tryptophan + 2-oxoglutarate = indole-3-pyruvate + L-glutamate. It participates in plant hormone metabolism; auxin biosynthesis. Its function is as follows. Probable tryptophan aminotransferase that may be involved in the regulation of auxin production in developing rice grains. The sequence is that of Tryptophan aminotransferase-related protein 1 from Oryza sativa subsp. japonica (Rice).